The following is a 495-amino-acid chain: Membrane-bound lytic murein transglycosylase F (495 aa).

Positions 1 to 30 (MSRIRHHRFIQSCLVISTLLITLTGCQVES) are cleaved as a signal peptide. Residues 31–270 (EPKTKLEQIR…LLEEKYFGHV (240 aa)) are non-LT domain. Residues 272–495 (SFDYVDTRAF…SVSQAIETKK (224 aa)) are LT domain. Glu-315 is an active-site residue.

The protein in the N-terminal section; belongs to the bacterial solute-binding protein 3 family. In the C-terminal section; belongs to the transglycosylase Slt family.

It localises to the cell outer membrane. It carries out the reaction Exolytic cleavage of the (1-&gt;4)-beta-glycosidic linkage between N-acetylmuramic acid (MurNAc) and N-acetylglucosamine (GlcNAc) residues in peptidoglycan, from either the reducing or the non-reducing ends of the peptidoglycan chains, with concomitant formation of a 1,6-anhydrobond in the MurNAc residue.. Murein-degrading enzyme that degrades murein glycan strands and insoluble, high-molecular weight murein sacculi, with the concomitant formation of a 1,6-anhydromuramoyl product. Lytic transglycosylases (LTs) play an integral role in the metabolism of the peptidoglycan (PG) sacculus. Their lytic action creates space within the PG sacculus to allow for its expansion as well as for the insertion of various structures such as secretion systems and flagella. The chain is Membrane-bound lytic murein transglycosylase F from Aliivibrio fischeri (strain ATCC 700601 / ES114) (Vibrio fischeri).